The following is a 48-amino-acid chain: Delta-stichotoxin-Hmg4a (48 aa).

Intrachain disulfides connect Cys-3–Cys-43, Cys-5–Cys-33, and Cys-26–Cys-44.

This sequence belongs to the sea anemone sodium channel inhibitory toxin family. Type II subfamily.

The protein localises to the secreted. The protein resides in the nematocyst. Functionally, binds specifically to voltage-gated sodium channels (Nav), thereby delaying their inactivation during signal transduction. Its toxicity is weaker than that of RpIII (AC P08380). This Heteractis magnifica (Magnificent sea anemone) protein is Delta-stichotoxin-Hmg4a.